The following is a 297-amino-acid chain: Acetylglutamate kinase (297 aa).

Residues Gly-68 to Gly-69, Arg-90, and Asn-189 each bind substrate.

This sequence belongs to the acetylglutamate kinase family. ArgB subfamily.

It localises to the cytoplasm. The catalysed reaction is N-acetyl-L-glutamate + ATP = N-acetyl-L-glutamyl 5-phosphate + ADP. It functions in the pathway amino-acid biosynthesis; L-arginine biosynthesis; N(2)-acetyl-L-ornithine from L-glutamate: step 2/4. In terms of biological role, catalyzes the ATP-dependent phosphorylation of N-acetyl-L-glutamate. The sequence is that of Acetylglutamate kinase from Akkermansia muciniphila (strain ATCC BAA-835 / DSM 22959 / JCM 33894 / BCRC 81048 / CCUG 64013 / CIP 107961 / Muc).